Consider the following 98-residue polypeptide: NADH-ubiquinone oxidoreductase chain 4L (98 aa).

Transmembrane regions (helical) follow at residues 1-21, 26-46, and 61-81; these read MPSI…GVLI, LMSS…LVSL, and IILL…LVMV.

It belongs to the complex I subunit 4L family. In terms of assembly, core subunit of respiratory chain NADH dehydrogenase (Complex I) which is composed of 45 different subunits.

It localises to the mitochondrion inner membrane. The catalysed reaction is a ubiquinone + NADH + 5 H(+)(in) = a ubiquinol + NAD(+) + 4 H(+)(out). In terms of biological role, core subunit of the mitochondrial membrane respiratory chain NADH dehydrogenase (Complex I) which catalyzes electron transfer from NADH through the respiratory chain, using ubiquinone as an electron acceptor. Part of the enzyme membrane arm which is embedded in the lipid bilayer and involved in proton translocation. The protein is NADH-ubiquinone oxidoreductase chain 4L (MT-ND4L) of Galago senegalensis (Northern lesser bushbaby).